A 475-amino-acid chain; its full sequence is Rho GTPase-activating protein 15 (475 aa).

Positions 1-22 are disordered; the sequence is MERSTTSDTASEKPNPSHSTGA. One can recognise a PH domain in the interval 80-190; sequence VVEKEGYLLK…WFHAIKNAID (111 aa). The Rho-GAP domain occupies 281–470; that stretch reads SHLHLVCEHE…LMLSEYSKIF (190 aa).

It localises to the cytoplasm. The protein resides in the membrane. Its function is as follows. GTPase activator for the Rho-type GTPases by converting them to an inactive GDP-bound state. In Gallus gallus (Chicken), this protein is Rho GTPase-activating protein 15 (ARHGAP15).